Here is a 179-residue protein sequence, read N- to C-terminus: Ribulose bisphosphate carboxylase small subunit, chloroplastic 5 (179 aa).

Residues 1–58 constitute a chloroplast transit peptide; that stretch reads MASSATMLSSVATAACAAPAQASMVAPFVGLKSASAFPVTQKTATGLSTLPSNGGRVQ.

The protein belongs to the RuBisCO small chain family. As to quaternary structure, heterohexadecamer of 8 large and 8 small subunits.

The protein localises to the plastid. It is found in the chloroplast. In terms of biological role, ruBisCO catalyzes two reactions: the carboxylation of D-ribulose 1,5-bisphosphate, the primary event in carbon dioxide fixation, as well as the oxidative fragmentation of the pentose substrate. Both reactions occur simultaneously and in competition at the same active site. Although the small subunit is not catalytic it is essential for maximal activity. The polypeptide is Ribulose bisphosphate carboxylase small subunit, chloroplastic 5 (Fritillaria agrestis (Stinkbells)).